Consider the following 248-residue polypeptide: Large ribosomal subunit protein uL2 (248 aa).

Residues 203–248 form a disordered region; that stretch reads AHPAGGGHHPKGLTPAPRNAPPGRKVGHIAPRRTGRKKGASRTPTQ. Positions 227-242 are enriched in basic residues; that stretch reads KVGHIAPRRTGRKKGA.

This sequence belongs to the universal ribosomal protein uL2 family. As to quaternary structure, part of the 50S ribosomal subunit. Forms a bridge to the 30S subunit in the 70S ribosome.

One of the primary rRNA binding proteins. Required for association of the 30S and 50S subunits to form the 70S ribosome, for tRNA binding and peptide bond formation. It has been suggested to have peptidyltransferase activity; this is somewhat controversial. Makes several contacts with the 16S rRNA in the 70S ribosome. In Thermofilum pendens (strain DSM 2475 / Hrk 5), this protein is Large ribosomal subunit protein uL2.